The following is a 343-amino-acid chain: Protein RecA (343 aa).

Residue 66–73 (GPESSGKT) participates in ATP binding.

This sequence belongs to the RecA family.

Its subcellular location is the cytoplasm. In terms of biological role, can catalyze the hydrolysis of ATP in the presence of single-stranded DNA, the ATP-dependent uptake of single-stranded DNA by duplex DNA, and the ATP-dependent hybridization of homologous single-stranded DNAs. It interacts with LexA causing its activation and leading to its autocatalytic cleavage. In Dechloromonas aromatica (strain RCB), this protein is Protein RecA.